Consider the following 1642-residue polypeptide: Mitochondrial 3' processome subunit 2 (1642 aa).

A mitochondrion-targeting transit peptide spans 1–27 (MGLPFLCHTRVCLFSNKIPFVLCGSRF). Disordered regions lie at residues 43-69 (ETLNFPELSSPSTSKEPSVGSDSPQKK) and 745-772 (KGEKTDVVQHQQPSRLNEGGELPTLSGP). Polar residues predominate over residues 49–65 (ELSSPSTSKEPSVGSDS).

Component of the mitochondrial 3' processome (MPsome) complex composed at least of terminal uridylyltransferase KRET1/TUT1, 3'-5' exonuclease DSS1, MPSS1, MPSS2 and MPSS3. Within the complex, interacts with DSS1.

It localises to the mitochondrion. As part of the mitochondrial 3' processome (MPsome), involved in the maturation of guided RNA (gRNA) precursors. The chain is Mitochondrial 3' processome subunit 2 from Trypanosoma brucei brucei.